The following is an 80-amino-acid chain: Acyl carrier protein (80 aa).

Residues 2–77 (KNIEERIKKI…KSIDFIQKKN (76 aa)) form the Carrier domain. An O-(pantetheine 4'-phosphoryl)serine modification is found at Ser37.

It belongs to the acyl carrier protein (ACP) family. Post-translationally, 4'-phosphopantetheine is transferred from CoA to a specific serine of apo-ACP by AcpS. This modification is essential for activity because fatty acids are bound in thioester linkage to the sulfhydryl of the prosthetic group.

It localises to the cytoplasm. It functions in the pathway lipid metabolism; fatty acid biosynthesis. Functionally, carrier of the growing fatty acid chain in fatty acid biosynthesis. The polypeptide is Acyl carrier protein (Buchnera aphidicola subsp. Acyrthosiphon pisum (strain APS) (Acyrthosiphon pisum symbiotic bacterium)).